Here is a 306-residue protein sequence, read N- to C-terminus: Homoserine O-acetyltransferase (306 aa).

Residue Cys142 is the Acyl-thioester intermediate of the active site. Substrate-binding residues include Lys163 and Ser192. His235 acts as the Proton acceptor in catalysis. The active site involves Glu237. Arg249 is a substrate binding site.

It belongs to the MetA family.

It localises to the cytoplasm. The catalysed reaction is L-homoserine + acetyl-CoA = O-acetyl-L-homoserine + CoA. It participates in amino-acid biosynthesis; L-methionine biosynthesis via de novo pathway; O-acetyl-L-homoserine from L-homoserine: step 1/1. In terms of biological role, transfers an acetyl group from acetyl-CoA to L-homoserine, forming acetyl-L-homoserine. The protein is Homoserine O-acetyltransferase of Brucella melitensis biotype 1 (strain ATCC 23456 / CCUG 17765 / NCTC 10094 / 16M).